The chain runs to 206 residues: 2,3-bisphosphoglycerate-dependent phosphoglycerate mutase (206 aa).

Substrate contacts are provided by residues 9–16 (RHGQSEWN), 22–23 (TG), Arg61, 88–91 (ERDY), Lys99, 115–116 (RR), and 159–160 (GN). His10 functions as the Tele-phosphohistidine intermediate in the catalytic mechanism. Residue Glu88 is the Proton donor/acceptor of the active site.

It belongs to the phosphoglycerate mutase family. BPG-dependent PGAM subfamily. Homodimer.

It catalyses the reaction (2R)-2-phosphoglycerate = (2R)-3-phosphoglycerate. The protein operates within carbohydrate degradation; glycolysis; pyruvate from D-glyceraldehyde 3-phosphate: step 3/5. Its function is as follows. Catalyzes the interconversion of 2-phosphoglycerate and 3-phosphoglycerate. The chain is 2,3-bisphosphoglycerate-dependent phosphoglycerate mutase from Mesorhizobium japonicum (strain LMG 29417 / CECT 9101 / MAFF 303099) (Mesorhizobium loti (strain MAFF 303099)).